The following is a 355-amino-acid chain: MKIVADENLAFTDYFFSEFGDIQYKAGRTLTHTDVQDAEALLVRSVTAVNESLIQNTALKYVGSATIGTDHLDIQALEKQGITWANAAGCNAQAVAEYVITALLHLDASLLEQQEKFTLGIVGLGNVGKRLAYMAQLLGWKVIGFDPYVQLDSIENVSFQTLLQQANAVSIHVPLTKKGEHATYHLFDEKAFAALQPNTILINSARGPVVKEAALIEDIQRTQRKVVLDVFEHEPVISEELLNMLALATPHIAGYSLEGKARGTQMIYEAFCQKFGYDINKRFETQLPACEDYFSGHDLKAVLKQKLSQIYDIAQDDANIRACVKEGKVEQKAFDLLRKNYPLRREWAAHGGPQA.

Substrate is bound by residues serine 45 and threonine 66. Aspartate 146 is an NAD(+) binding site. Residue arginine 206 is part of the active site. Aspartate 229 serves as a coordination point for NAD(+). Glutamate 234 is an active-site residue. Histidine 251 functions as the Proton donor in the catalytic mechanism. Glycine 254 provides a ligand contact to NAD(+). Tyrosine 255 is a substrate binding site.

It belongs to the D-isomer specific 2-hydroxyacid dehydrogenase family. PdxB subfamily. Homodimer.

It localises to the cytoplasm. It carries out the reaction 4-phospho-D-erythronate + NAD(+) = (R)-3-hydroxy-2-oxo-4-phosphooxybutanoate + NADH + H(+). The protein operates within cofactor biosynthesis; pyridoxine 5'-phosphate biosynthesis; pyridoxine 5'-phosphate from D-erythrose 4-phosphate: step 2/5. Its function is as follows. Catalyzes the oxidation of erythronate-4-phosphate to 3-hydroxy-2-oxo-4-phosphonooxybutanoate. This is Erythronate-4-phosphate dehydrogenase from Acinetobacter baumannii (strain ACICU).